A 151-amino-acid chain; its full sequence is Ribonuclease H (151 aa).

Positions M1–K143 constitute an RNase H type-1 domain. 4 residues coordinate Mg(2+): D10, E48, D70, and D135.

Belongs to the RNase H family. As to quaternary structure, monomer. It depends on Mg(2+) as a cofactor.

The protein resides in the cytoplasm. It carries out the reaction Endonucleolytic cleavage to 5'-phosphomonoester.. Functionally, endonuclease that specifically degrades the RNA of RNA-DNA hybrids. This is Ribonuclease H from Blochmanniella pennsylvanica (strain BPEN).